Reading from the N-terminus, the 235-residue chain is UPF0758 protein CD630_11440 (235 aa).

The 123-residue stretch at 113–235 (KIMNPWDIQR…YFSFKENMII (123 aa)) folds into the MPN domain. The Zn(2+) site is built by His184, His186, and Asp197. The short motif at 184-197 (HNHPSGSVEPSRED) is the JAMM motif element.

It belongs to the UPF0758 family.

The sequence is that of UPF0758 protein CD630_11440 from Clostridioides difficile (strain 630) (Peptoclostridium difficile).